A 310-amino-acid chain; its full sequence is MSAPRILHRVARPVPSSISTITRLNRQFGTTALRLKDGSDEASPEVKAHRANQANKAPNQFVPNTTSTMTKDFVNVGQKPAPPEMLNSANPNYRPSDPYPGRIEHFTGGRQDNGAQKPELGVGEMEGITFKVEPLKRVGEELATKRARLLYQSRKRGILESDLLLSTFADVYLGKMNYDQLVEYDSFLDENDWDIYYWATQDSPEEISPSTPKEDTITETWKESGAKSGEWAQTIGAFRAAYRPVPSRWQNSEVLALLREHVRDKSATGFEKAKNKKTGGGGGLGRMPDVQVFNSGHIVHRRHVLRMLYI.

Over residues 35–48 (LKDGSDEASPEVKA) the composition is skewed to basic and acidic residues. Residues 35–67 (LKDGSDEASPEVKAHRANQANKAPNQFVPNTTS) form a disordered region. Over residues 52-67 (NQANKAPNQFVPNTTS) the composition is skewed to polar residues.

This sequence belongs to the SDHAF2 family. Interacts with the flavoprotein subunit within the SDH catalytic dimer.

It is found in the mitochondrion matrix. Functionally, plays an essential role in the assembly of succinate dehydrogenase (SDH), an enzyme complex (also referred to as respiratory complex II) that is a component of both the tricarboxylic acid (TCA) cycle and the mitochondrial electron transport chain, and which couples the oxidation of succinate to fumarate with the reduction of ubiquinone (coenzyme Q) to ubiquinol. Required for flavinylation (covalent attachment of FAD) of the flavoprotein subunit of the SDH catalytic dimer. The protein is Succinate dehydrogenase assembly factor 2, mitochondrial of Penicillium rubens (strain ATCC 28089 / DSM 1075 / NRRL 1951 / Wisconsin 54-1255) (Penicillium chrysogenum).